A 76-amino-acid polypeptide reads, in one-letter code: DNA-directed RNA polymerase subunit epsilon (76 aa).

It belongs to the RNA polymerase subunit epsilon family. In terms of assembly, RNAP is composed of a core of 2 alpha, a beta and a beta' subunit. The core is associated with a delta subunit, and at least one of epsilon or omega. When a sigma factor is associated with the core the holoenzyme is formed, which can initiate transcription.

The enzyme catalyses RNA(n) + a ribonucleoside 5'-triphosphate = RNA(n+1) + diphosphate. A non-essential component of RNA polymerase (RNAP). In Streptococcus equi subsp. zooepidemicus (strain H70), this protein is DNA-directed RNA polymerase subunit epsilon.